A 64-amino-acid polypeptide reads, in one-letter code: Small, acid-soluble spore protein D (64 aa).

This sequence belongs to the alpha/beta-type SASP family.

Its function is as follows. SASP are bound to spore DNA. They are double-stranded DNA-binding proteins that cause DNA to change to an a-like conformation. They protect the DNA backbone from chemical and enzymatic cleavage and are thus involved in dormant spore's high resistance to UV light. This Bacillus subtilis (strain 168) protein is Small, acid-soluble spore protein D (sspD).